Reading from the N-terminus, the 309-residue chain is Homoserine kinase (309 aa).

91–101 (PIGSGLGSSAC) is an ATP binding site.

This sequence belongs to the GHMP kinase family. Homoserine kinase subfamily.

The protein localises to the cytoplasm. The enzyme catalyses L-homoserine + ATP = O-phospho-L-homoserine + ADP + H(+). It participates in amino-acid biosynthesis; L-threonine biosynthesis; L-threonine from L-aspartate: step 4/5. Functionally, catalyzes the ATP-dependent phosphorylation of L-homoserine to L-homoserine phosphate. The sequence is that of Homoserine kinase from Cronobacter sakazakii (strain ATCC BAA-894) (Enterobacter sakazakii).